We begin with the raw amino-acid sequence, 141 residues long: Nucleoside diphosphate kinase (141 aa).

6 residues coordinate ATP: lysine 11, phenylalanine 59, arginine 87, threonine 93, arginine 104, and asparagine 114. Catalysis depends on histidine 117, which acts as the Pros-phosphohistidine intermediate.

It belongs to the NDK family. As to quaternary structure, homotetramer. Requires Mg(2+) as cofactor.

It is found in the cytoplasm. It carries out the reaction a 2'-deoxyribonucleoside 5'-diphosphate + ATP = a 2'-deoxyribonucleoside 5'-triphosphate + ADP. The enzyme catalyses a ribonucleoside 5'-diphosphate + ATP = a ribonucleoside 5'-triphosphate + ADP. Its function is as follows. Major role in the synthesis of nucleoside triphosphates other than ATP. The ATP gamma phosphate is transferred to the NDP beta phosphate via a ping-pong mechanism, using a phosphorylated active-site intermediate. This is Nucleoside diphosphate kinase from Burkholderia multivorans (strain ATCC 17616 / 249).